Here is a 151-residue protein sequence, read N- to C-terminus: Calmodulin-like protein 9 (151 aa).

EF-hand domains are found at residues 8-43 (EQIQ…MGKN), 44-79 (PKAE…NTSQ), 81-116 (SASD…MGMK), and 117-151 (ITAE…AASY). 8 residues coordinate Ca(2+): Asp94, Asp96, Asp98, Glu105, Asp130, Asp132, Asp134, and Glu141.

This sequence belongs to the calmodulin family. In terms of assembly, interacts with IQD1. Interacts with ILK1. Binds to ABCG36. Expressed in leaves, flowers and siliques.

Potential calcium sensor. This Arabidopsis thaliana (Mouse-ear cress) protein is Calmodulin-like protein 9.